The sequence spans 98 residues: Flagellar hook-basal body complex protein FliE (98 aa).

Belongs to the FliE family.

The protein resides in the bacterial flagellum basal body. The polypeptide is Flagellar hook-basal body complex protein FliE (Listeria monocytogenes serovar 1/2a (strain ATCC BAA-679 / EGD-e)).